The following is a 585-amino-acid chain: Cysteine/serine-rich nuclear protein 3 (585 aa).

Disordered stretches follow at residues 1–52 (MSGI…TPSS) and 335–395 (ELDC…GFVE). Over residues 30-40 (SSESADSGDSV) the composition is skewed to low complexity. The segment covering 41–52 (NPSTSSHFTPSS) has biased composition (polar residues). The span at 335–349 (ELDCQGEEEEEEEDG) shows a compositional bias: acidic residues. The span at 351-366 (SFCSGVTDSSTQSLAP) shows a compositional bias: polar residues. The span at 368 to 389 (ESDEEEEEEEEEEEEEDDDDDK) shows a compositional bias: acidic residues.

Belongs to the AXUD1 family.

It localises to the nucleus. Binds to the consensus sequence 5'-AGAGTG-3' and has transcriptional activator activity. Plays a role in apoptosis. This chain is Cysteine/serine-rich nuclear protein 3 (CSRNP3), found in Homo sapiens (Human).